The following is a 475-amino-acid chain: Kynureninase (475 aa).

Residues L142, T143, 170–173, D255, H258, and Y280 contribute to the pyridoxal 5'-phosphate site; that span reads FPSD. At K281 the chain carries N6-(pyridoxal phosphate)lysine. Positions 320 and 348 each coordinate pyridoxal 5'-phosphate.

This sequence belongs to the kynureninase family. In terms of assembly, homodimer. The cofactor is pyridoxal 5'-phosphate.

It is found in the cytoplasm. The enzyme catalyses L-kynurenine + H2O = anthranilate + L-alanine + H(+). The catalysed reaction is 3-hydroxy-L-kynurenine + H2O = 3-hydroxyanthranilate + L-alanine + H(+). It functions in the pathway amino-acid degradation; L-kynurenine degradation; L-alanine and anthranilate from L-kynurenine: step 1/1. The protein operates within cofactor biosynthesis; NAD(+) biosynthesis; quinolinate from L-kynurenine: step 2/3. Functionally, catalyzes the cleavage of L-kynurenine (L-Kyn) and L-3-hydroxykynurenine (L-3OHKyn) into anthranilic acid (AA) and 3-hydroxyanthranilic acid (3-OHAA), respectively. The protein is Kynureninase (bna5) of Botryotinia fuckeliana (strain B05.10) (Noble rot fungus).